A 127-amino-acid chain; its full sequence is MSIPNNLRYSEEHEWVKTEGNEVVIGITHFAQNELGDIVFVELPEVGATIEADEPFGSVESVKTVSELYAPVSGKVVAVNEELSDQPELVNESPYEGAWMVKVELSDASQVEKLLTAEKYAEMTNQD.

Positions 22 to 104 (EVVIGITHFA…YEGAWMVKVE (83 aa)) constitute a Lipoyl-binding domain. At Lys-63 the chain carries N6-lipoyllysine.

Belongs to the GcvH family. In terms of assembly, the glycine cleavage system is composed of four proteins: P, T, L and H. It depends on (R)-lipoate as a cofactor.

The glycine cleavage system catalyzes the degradation of glycine. The H protein shuttles the methylamine group of glycine from the P protein to the T protein. In terms of biological role, is also involved in protein lipoylation via its role as an octanoyl/lipoyl carrier protein intermediate. The protein is Glycine cleavage system H protein of Bacillus cereus (strain ZK / E33L).